We begin with the raw amino-acid sequence, 319 residues long: Acetyl-coenzyme A carboxylase carboxyl transferase subunit alpha (319 aa).

The CoA carboxyltransferase C-terminal domain occupies 35–296; that stretch reads DLDKEIEQLE…KDMLVKQLEE (262 aa).

This sequence belongs to the AccA family. Acetyl-CoA carboxylase is a heterohexamer composed of biotin carboxyl carrier protein (AccB), biotin carboxylase (AccC) and two subunits each of ACCase subunit alpha (AccA) and ACCase subunit beta (AccD).

Its subcellular location is the cytoplasm. It carries out the reaction N(6)-carboxybiotinyl-L-lysyl-[protein] + acetyl-CoA = N(6)-biotinyl-L-lysyl-[protein] + malonyl-CoA. It functions in the pathway lipid metabolism; malonyl-CoA biosynthesis; malonyl-CoA from acetyl-CoA: step 1/1. Its function is as follows. Component of the acetyl coenzyme A carboxylase (ACC) complex. First, biotin carboxylase catalyzes the carboxylation of biotin on its carrier protein (BCCP) and then the CO(2) group is transferred by the carboxyltransferase to acetyl-CoA to form malonyl-CoA. The sequence is that of Acetyl-coenzyme A carboxylase carboxyl transferase subunit alpha from Vibrio atlanticus (strain LGP32) (Vibrio splendidus (strain Mel32)).